Here is a 226-residue protein sequence, read N- to C-terminus: EEF1A lysine methyltransferase 3 (226 aa).

S-adenosyl-L-methionine-binding positions include W57, 83-85 (GAG), D104, W133, and A150.

Belongs to the methyltransferase superfamily. METTL21 family. Interacts with members of the heat shock protein 70 and 90 families and of the TCP-1 chaperonin family, as well as with HSPD1, STIP1 and tubulin; at least some of these proteins may be methylation substrates.

The protein resides in the cytoplasm. It localises to the cytoskeleton. Its subcellular location is the microtubule organizing center. It is found in the centrosome. The enzyme catalyses L-lysyl-[protein] + 3 S-adenosyl-L-methionine = N(6),N(6),N(6)-trimethyl-L-lysyl-[protein] + 3 S-adenosyl-L-homocysteine + 3 H(+). It catalyses the reaction L-lysyl-[protein] + S-adenosyl-L-methionine = N(6)-methyl-L-lysyl-[protein] + S-adenosyl-L-homocysteine + H(+). The catalysed reaction is N(6)-methyl-L-lysyl-[protein] + S-adenosyl-L-methionine = N(6),N(6)-dimethyl-L-lysyl-[protein] + S-adenosyl-L-homocysteine + H(+). It carries out the reaction N(6),N(6)-dimethyl-L-lysyl-[protein] + S-adenosyl-L-methionine = N(6),N(6),N(6)-trimethyl-L-lysyl-[protein] + S-adenosyl-L-homocysteine + H(+). Functionally, protein-lysine methyltransferase that selectively mono-, di- and trimethylates 'Lys-165' of the translation elongation factors EEF1A1 and EEF1A2 in an aminoacyl-tRNA and GTP-dependent manner. EEF1A1 methylation by EEF1AKMT3 is dynamic as well as inducible by stress conditions, such as ER-stress, and plays a regulatory role on mRNA translation. This is EEF1A lysine methyltransferase 3 from Bos taurus (Bovine).